Here is a 718-residue protein sequence, read N- to C-terminus: Origin of replication complex subunit 3 (718 aa).

Residues 26–43 show a composition bias toward low complexity; it reads GAAASSSSSSAPSLPSSG. Residues 26–75 form a disordered region; sequence GAAASSSSSSAPSLPSSGRARRRIDVSGLASPNPKPGKRSRDDDAAEDDD. The Nuclear localization signal motif lies at 659–666; the sequence is IKRKPHTS.

Belongs to the ORC3 family. In terms of assembly, component of the origin recognition complex (ORC) composed of at least ORC1, ORC2, ORC3, ORC4, ORC5 and ORC6. ORC is regulated in a cell-cycle and development dependent manner. It is sequentially assembled at the exit from anaphase of mitosis and disassembled as cells enter S phase. In terms of tissue distribution, expressed at low levels in the shoot apical meristem (SAM), leaves, ears and roots (including root tips).

The protein localises to the nucleus. In terms of biological role, component of the origin recognition complex (ORC) that binds origins of replication. DNA-binding is ATP-dependent. The specific DNA sequences that define origins of replication have not been identified yet. This is Origin of replication complex subunit 3 from Oryza sativa subsp. japonica (Rice).